Here is a 238-residue protein sequence, read N- to C-terminus: Adapter protein MecA (238 aa).

Residues 108 to 133 form a disordered region; it reads EDENEESVQGNQQQRRSHASDHSKRA.

The protein belongs to the MecA family. In terms of assembly, homodimer.

Enables the recognition and targeting of unfolded and aggregated proteins to the ClpC protease or to other proteins involved in proteolysis. The chain is Adapter protein MecA from Staphylococcus carnosus (strain TM300).